The sequence spans 374 residues: Putative serine/threonine-protein kinase ZK507.3 (374 aa).

One can recognise a Protein kinase domain in the interval 25 to 296 (WKVIVELGKG…CKLTLKEPLV (272 aa)). Residues 31 to 39 (LGKGGYGTV) and Lys60 each bind ATP. Catalysis depends on Asp158, which acts as the Proton acceptor. Residues 302 to 374 (NDNESGSTPT…KTRNKKPSRK (73 aa)) form a disordered region. Over residues 306–324 (SGSTPTTSATACSPSSSTG) the composition is skewed to low complexity. Residues 334–343 (IASNIDQKSI) are compositionally biased toward polar residues. Basic residues predominate over residues 364 to 374 (TKTRNKKPSRK).

It belongs to the protein kinase superfamily. Ser/Thr protein kinase family.

It catalyses the reaction L-seryl-[protein] + ATP = O-phospho-L-seryl-[protein] + ADP + H(+). It carries out the reaction L-threonyl-[protein] + ATP = O-phospho-L-threonyl-[protein] + ADP + H(+). In Caenorhabditis elegans, this protein is Putative serine/threonine-protein kinase ZK507.3.